The following is a 237-amino-acid chain: 7-cyano-7-deazaguanine synthase (237 aa).

An ATP-binding site is contributed by 15–25 (LSGGMDSTVCA). C197, C205, C208, and C211 together coordinate Zn(2+).

The protein belongs to the QueC family. The cofactor is Zn(2+).

It catalyses the reaction 7-carboxy-7-deazaguanine + NH4(+) + ATP = 7-cyano-7-deazaguanine + ADP + phosphate + H2O + H(+). Its pathway is purine metabolism; 7-cyano-7-deazaguanine biosynthesis. In terms of biological role, catalyzes the ATP-dependent conversion of 7-carboxy-7-deazaguanine (CDG) to 7-cyano-7-deazaguanine (preQ(0)). This Koribacter versatilis (strain Ellin345) protein is 7-cyano-7-deazaguanine synthase.